A 1338-amino-acid polypeptide reads, in one-letter code: Vascular endothelial growth factor receptor 1 (1338 aa).

An N-terminal signal peptide occupies residues Met1–Gly26. At Ser27–Glu758 the chain is on the extracellular side. Ig-like C2-type domains lie at Pro32–Ala123, Gly151–His214, Ile230–His327, Thr335–Thr421, Pro428–Thr553, Pro556–Thr654, and Pro661–Thr747. Intrachain disulfides connect Cys53–Cys107 and Cys158–Cys207. Asn100, Asn164, Asn196, and Asn251 each carry an N-linked (GlcNAc...) asparagine glycan. Cys252 and Cys311 are disulfide-bonded. 9 N-linked (GlcNAc...) asparagine glycosylation sites follow: Asn323, Asn402, Asn417, Asn474, Asn547, Asn597, Asn620, Asn625, and Asn666. Cys454 and Cys535 form a disulfide bridge. The cysteines at positions 577 and 636 are disulfide-linked. Cys682 and Cys731 are joined by a disulfide. The helical transmembrane segment at Leu759–Ile780 threads the bilayer. Residues Arg781 to Ile1338 lie on the Cytoplasmic side of the membrane. A Protein kinase domain is found at Leu827–Leu1158. Residues Leu833–Val841 and Lys861 contribute to the ATP site. At Tyr914 the chain carries Phosphotyrosine; by autocatalysis. The segment covering Pro940 to Leu957 has biased composition (basic and acidic residues). Residues Pro940–Glu982 are disordered. Residues Ser959–Phe971 show a composition bias toward polar residues. Asp1022 serves as the catalytic Proton acceptor. 7 positions are modified to phosphotyrosine; by autocatalysis: Tyr1053, Tyr1169, Tyr1213, Tyr1242, Tyr1309, Tyr1327, and Tyr1333.

This sequence belongs to the protein kinase superfamily. Tyr protein kinase family. CSF-1/PDGF receptor subfamily. In terms of assembly, interacts with VEGFA, VEGFB and PGF. Monomer in the absence of bound VEGFA, VEGFB or PGF. Homodimer in the presence of bound VEGFA, VEGFB and PGF. Can also form a heterodimer with KDR. Interacts (when tyrosine phosphorylated) with CBL, CRK, GRB2, NCK1, PIK3R1, PLCG, PSEN1 and PTPN11. Probably also interacts with PTPRB. Interacts with RACK1. Identified in a complex with CBL and CD2AP. N-glycosylated. In terms of processing, ubiquitinated after VEGFA-mediated autophosphorylation, leading to proteolytic degradation. Post-translationally, autophosphorylated on tyrosine residues upon ligand binding. Autophosphorylation occurs in trans, i.e. one subunit of the dimeric receptor phosphorylates tyrosine residues on the other subunit. Phosphorylation at Tyr-1169 is important for interaction with PLCG. Phosphorylation at Tyr-1213 is important for interaction with PIK3R1, PTPN11, GRB2, and PLCG. Phosphorylation at Tyr-1333 is important for endocytosis and for interaction with CBL, NCK1 and CRK. Is probably dephosphorylated by PTPRB. Detected in normal lung, but also in placenta, liver, kidney, heart and brain tissues. Specifically expressed in most of the vascular endothelial cells, and also expressed in peripheral blood monocytes. Isoform 2 is strongly expressed in placenta. Isoform 3 is expressed in corneal epithelial cells (at protein level). Isoform 3 is expressed in vascular smooth muscle cells (VSMC).

Its subcellular location is the cell membrane. It is found in the endosome. It localises to the secreted. The protein resides in the cytoplasm. It catalyses the reaction L-tyrosyl-[protein] + ATP = O-phospho-L-tyrosyl-[protein] + ADP + H(+). Its activity is regulated as follows. Present in an inactive conformation in the absence of bound ligand. Binding of VEGFA, VEGFB or PGF leads to dimerization and activation by autophosphorylation on tyrosine residues. In terms of biological role, tyrosine-protein kinase that acts as a cell-surface receptor for VEGFA, VEGFB and PGF, and plays an essential role in the development of embryonic vasculature, the regulation of angiogenesis, cell survival, cell migration, macrophage function, chemotaxis, and cancer cell invasion. Acts as a positive regulator of postnatal retinal hyaloid vessel regression. May play an essential role as a negative regulator of embryonic angiogenesis by inhibiting excessive proliferation of endothelial cells. Can promote endothelial cell proliferation, survival and angiogenesis in adulthood. Its function in promoting cell proliferation seems to be cell-type specific. Promotes PGF-mediated proliferation of endothelial cells, proliferation of some types of cancer cells, but does not promote proliferation of normal fibroblasts (in vitro). Has very high affinity for VEGFA and relatively low protein kinase activity; may function as a negative regulator of VEGFA signaling by limiting the amount of free VEGFA and preventing its binding to KDR. Modulates KDR signaling by forming heterodimers with KDR. Ligand binding leads to the activation of several signaling cascades. Activation of PLCG leads to the production of the cellular signaling molecules diacylglycerol and inositol 1,4,5-trisphosphate and the activation of protein kinase C. Mediates phosphorylation of PIK3R1, the regulatory subunit of phosphatidylinositol 3-kinase, leading to activation of phosphatidylinositol kinase and the downstream signaling pathway. Mediates activation of MAPK1/ERK2, MAPK3/ERK1 and the MAP kinase signaling pathway, as well as of the AKT1 signaling pathway. Phosphorylates SRC and YES1, and may also phosphorylate CBL. Promotes phosphorylation of AKT1 at 'Ser-473'. Promotes phosphorylation of PTK2/FAK1. Its function is as follows. Phosphorylates PLCG. May function as decoy receptor for VEGFA. Functionally, has a truncated kinase domain; it increases phosphorylation of SRC at 'Tyr-418' by unknown means and promotes tumor cell invasion. This Homo sapiens (Human) protein is Vascular endothelial growth factor receptor 1 (FLT1).